We begin with the raw amino-acid sequence, 318 residues long: Olfactory receptor 13C9 (318 aa).

Residues 1 to 25 lie on the Extracellular side of the membrane; the sequence is MEWENQTILVEFFLKGHSVHPRLEL. Residue Asn-5 is glycosylated (N-linked (GlcNAc...) asparagine). A helical transmembrane segment spans residues 26-46; that stretch reads LFFVLIFIMYVVILLGNGTLI. The Cytoplasmic portion of the chain corresponds to 47–54; the sequence is LISILDPH. A helical membrane pass occupies residues 55–75; sequence LHTPMYFFLGNLSFLDICYTT. The Extracellular segment spans residues 76-99; sequence TSIPSTLVSFLSERKTISFSGCAV. Cys-97 and Cys-189 are disulfide-bonded. A helical transmembrane segment spans residues 100-120; sequence QMFLGLAMGTTECVLLGMMAF. The Cytoplasmic portion of the chain corresponds to 121–139; sequence DRYVAICNPLRYPIIMSKN. Residues 140 to 160 form a helical membrane-spanning segment; it reads AYVPMAVGSWFAGIVNSAVQT. At 161–197 the chain is on the extracellular side; the sequence is TFVVQLPFCRKNVINHFSCEILAVMKLACADISGNEF. The chain crosses the membrane as a helical span at residues 198–217; it reads LMLVATILFTLMPLLLIVIS. Topologically, residues 218 to 237 are cytoplasmic; the sequence is YSLIISSILKIHSSEGRSKA. Residues 238–258 form a helical membrane-spanning segment; it reads FSTCSAHLTVVIIFYGTILFM. Topologically, residues 259-277 are extracellular; it reads YMKPKSKETLNSDDLDATD. A helical transmembrane segment spans residues 278–298; that stretch reads KIISMFYGVMTPMMNPLIYSL. Residues 299-318 lie on the Cytoplasmic side of the membrane; the sequence is RNKDVKEAVKHLPNRRFFSK.

Belongs to the G-protein coupled receptor 1 family.

Its subcellular location is the cell membrane. Functionally, odorant receptor. The protein is Olfactory receptor 13C9 (OR13C9) of Homo sapiens (Human).